The chain runs to 253 residues: 4-hydroxy-tetrahydrodipicolinate reductase (253 aa).

16–21 (GDTGRM) contacts NAD(+). Arginine 44 provides a ligand contact to NADP(+). Residues 85–87 (GTT) and 111–114 (CANT) each bind NAD(+). Histidine 144 serves as the catalytic Proton donor/acceptor. Histidine 145 contributes to the (S)-2,3,4,5-tetrahydrodipicolinate binding site. The Proton donor role is filled by lysine 148. Position 154-155 (154-155 (GT)) interacts with (S)-2,3,4,5-tetrahydrodipicolinate.

This sequence belongs to the DapB family.

Its subcellular location is the cytoplasm. The catalysed reaction is (S)-2,3,4,5-tetrahydrodipicolinate + NAD(+) + H2O = (2S,4S)-4-hydroxy-2,3,4,5-tetrahydrodipicolinate + NADH + H(+). It catalyses the reaction (S)-2,3,4,5-tetrahydrodipicolinate + NADP(+) + H2O = (2S,4S)-4-hydroxy-2,3,4,5-tetrahydrodipicolinate + NADPH + H(+). The protein operates within amino-acid biosynthesis; L-lysine biosynthesis via DAP pathway; (S)-tetrahydrodipicolinate from L-aspartate: step 4/4. Its function is as follows. Catalyzes the conversion of 4-hydroxy-tetrahydrodipicolinate (HTPA) to tetrahydrodipicolinate. The sequence is that of 4-hydroxy-tetrahydrodipicolinate reductase from Chlamydia trachomatis serovar A (strain ATCC VR-571B / DSM 19440 / HAR-13).